The chain runs to 714 residues: Polyribonucleotide nucleotidyltransferase (714 aa).

Mg(2+) is bound by residues Asp484 and Asp490. Residues 551–610 (PRIMVINIAPEKVREVIGPGGKVINKIIDETGVKIDTEDDGKITVAGENTESAQRAIDMI) enclose the KH domain. The 69-residue stretch at 620-688 (GEKYLGRVTK…DQGKMTLSRK (69 aa)) folds into the S1 motif domain. Positions 685–714 (LSRKALLPKPERKEKKNFDKKSEDQNSEDK) are disordered. Basic and acidic residues predominate over residues 693–714 (KPERKEKKNFDKKSEDQNSEDK).

It belongs to the polyribonucleotide nucleotidyltransferase family. The cofactor is Mg(2+).

It localises to the cytoplasm. It catalyses the reaction RNA(n+1) + phosphate = RNA(n) + a ribonucleoside 5'-diphosphate. Functionally, involved in mRNA degradation. Catalyzes the phosphorolysis of single-stranded polyribonucleotides processively in the 3'- to 5'-direction. This is Polyribonucleotide nucleotidyltransferase from Finegoldia magna (strain ATCC 29328 / DSM 20472 / WAL 2508) (Peptostreptococcus magnus).